The primary structure comprises 140 residues: MDQELMRIGVSLPDNLLDRFDNIIEKRGYSSRSEGIRDAIRNYIMHYEWMNEVEGERIGVITLIYDHDQRGLVNNLTDIQHEYMGMIKSSVHVHLDHDNCLELIMLQGEGKQVKEVAEKMMALKGVKHVKLTTVSPNTEL.

4 residues coordinate Ni(2+): histidine 81, histidine 92, histidine 94, and cysteine 100.

It belongs to the transcriptional regulatory CopG/NikR family. The cofactor is Ni(2+).

In terms of biological role, transcriptional regulator. The chain is Putative nickel-responsive regulator from Methanocella arvoryzae (strain DSM 22066 / NBRC 105507 / MRE50).